A 485-amino-acid polypeptide reads, in one-letter code: Hexokinase-1 (485 aa).

Positions 21–468 (KELMDEIHQL…SGAGAAVIAA (448 aa)) constitute a Hexokinase domain. The segment at 75–209 (TGKESGNYLA…ELPIEIVALI (135 aa)) is hexokinase small subdomain. ATP contacts are provided by residues 86–91 (DLGGTN) and K111. Substrate is bound by residues S158, 175-176 (TK), 210-211 (ND), and N237. A hexokinase large subdomain region spans residues 210–457 (NDTVGTLIAS…DPITIVPAED (248 aa)). A Phosphoserine modification is found at S245. Residue E269 coordinates substrate. S272 carries the phosphoserine modification. Residue E302 coordinates substrate. Residues 307–308 (GY), 344–348 (TSYPA), and 419–423 (SVYNK) contribute to the ATP site.

It belongs to the hexokinase family. As to quaternary structure, homodimer.

The catalysed reaction is a D-hexose + ATP = a D-hexose 6-phosphate + ADP + H(+). The enzyme catalyses D-fructose + ATP = D-fructose 6-phosphate + ADP + H(+). It carries out the reaction D-glucose + ATP = D-glucose 6-phosphate + ADP + H(+). Its pathway is carbohydrate metabolism; hexose metabolism. The protein operates within carbohydrate degradation; glycolysis; D-glyceraldehyde 3-phosphate and glycerone phosphate from D-glucose: step 1/4. Subject to allosteric control. Substrate inhibition by ATP. In terms of biological role, catalyzes the phosphorylation of hexose, such as D-glucose and D-fructose, to hexose 6-phosphate (D-glucose 6-phosphate and D-fructose 6-phosphate, respectively). Mediates the initial step of glycolysis by catalyzing phosphorylation of D-glucose to D-glucose 6-phosphate. This is Hexokinase-1 (HXK1) from Saccharomyces cerevisiae (strain ATCC 204508 / S288c) (Baker's yeast).